We begin with the raw amino-acid sequence, 242 residues long: MTDLSTLRFFRTPAHGCSYLEDRQASTLFVDPQAALSPELYSELSLLGFRRSGDYLYRPHCDSCNACIPARVRVDDFLPRRRHRRILKHNADLTVHREPARFSRELYTLYAAYINDRHGDGDMYPPSEEQFTNFLTCEWADTHFYGFREKGKLLAVAVTDQLNDGLSAVYTFFDPTLPERSLGVMALLWQIEQCQRLRLPYLYLGYWIRQCQKMSYKNQYQPLEILASGSWKEQSEPNDSGD.

This sequence belongs to the R-transferase family. Bpt subfamily.

The protein resides in the cytoplasm. The catalysed reaction is N-terminal L-glutamyl-[protein] + L-leucyl-tRNA(Leu) = N-terminal L-leucyl-L-glutamyl-[protein] + tRNA(Leu) + H(+). It carries out the reaction N-terminal L-aspartyl-[protein] + L-leucyl-tRNA(Leu) = N-terminal L-leucyl-L-aspartyl-[protein] + tRNA(Leu) + H(+). In terms of biological role, functions in the N-end rule pathway of protein degradation where it conjugates Leu from its aminoacyl-tRNA to the N-termini of proteins containing an N-terminal aspartate or glutamate. The sequence is that of Aspartate/glutamate leucyltransferase from Alcanivorax borkumensis (strain ATCC 700651 / DSM 11573 / NCIMB 13689 / SK2).